The primary structure comprises 315 residues: Acetyl-coenzyme A carboxylase carboxyl transferase subunit alpha (315 aa).

Positions 32 to 289 (EIDMLEASLE…KEAFTKQLSE (258 aa)) constitute a CoA carboxyltransferase C-terminal domain.

The protein belongs to the AccA family. As to quaternary structure, acetyl-CoA carboxylase is a heterohexamer composed of biotin carboxyl carrier protein (AccB), biotin carboxylase (AccC) and two subunits each of ACCase subunit alpha (AccA) and ACCase subunit beta (AccD).

It is found in the cytoplasm. The catalysed reaction is N(6)-carboxybiotinyl-L-lysyl-[protein] + acetyl-CoA = N(6)-biotinyl-L-lysyl-[protein] + malonyl-CoA. It participates in lipid metabolism; malonyl-CoA biosynthesis; malonyl-CoA from acetyl-CoA: step 1/1. In terms of biological role, component of the acetyl coenzyme A carboxylase (ACC) complex. First, biotin carboxylase catalyzes the carboxylation of biotin on its carrier protein (BCCP) and then the CO(2) group is transferred by the carboxyltransferase to acetyl-CoA to form malonyl-CoA. This chain is Acetyl-coenzyme A carboxylase carboxyl transferase subunit alpha, found in Staphylococcus carnosus (strain TM300).